The chain runs to 307 residues: 4-hydroxy-3-methylbut-2-enyl diphosphate reductase (307 aa).

Cys-13 lines the [4Fe-4S] cluster pocket. His-42 and His-75 together coordinate (2E)-4-hydroxy-3-methylbut-2-enyl diphosphate. Dimethylallyl diphosphate-binding residues include His-42 and His-75. Positions 42 and 75 each coordinate isopentenyl diphosphate. Cys-97 lines the [4Fe-4S] cluster pocket. (2E)-4-hydroxy-3-methylbut-2-enyl diphosphate is bound at residue His-125. His-125 contacts dimethylallyl diphosphate. His-125 is an isopentenyl diphosphate binding site. Glu-127 (proton donor) is an active-site residue. Thr-165 serves as a coordination point for (2E)-4-hydroxy-3-methylbut-2-enyl diphosphate. A [4Fe-4S] cluster-binding site is contributed by Cys-195. 4 residues coordinate (2E)-4-hydroxy-3-methylbut-2-enyl diphosphate: Ser-223, Ser-224, Asn-225, and Ser-267. Dimethylallyl diphosphate-binding residues include Ser-223, Ser-224, Asn-225, and Ser-267. Isopentenyl diphosphate contacts are provided by Ser-223, Ser-224, Asn-225, and Ser-267.

Belongs to the IspH family. The cofactor is [4Fe-4S] cluster.

It carries out the reaction isopentenyl diphosphate + 2 oxidized [2Fe-2S]-[ferredoxin] + H2O = (2E)-4-hydroxy-3-methylbut-2-enyl diphosphate + 2 reduced [2Fe-2S]-[ferredoxin] + 2 H(+). The enzyme catalyses dimethylallyl diphosphate + 2 oxidized [2Fe-2S]-[ferredoxin] + H2O = (2E)-4-hydroxy-3-methylbut-2-enyl diphosphate + 2 reduced [2Fe-2S]-[ferredoxin] + 2 H(+). It participates in isoprenoid biosynthesis; dimethylallyl diphosphate biosynthesis; dimethylallyl diphosphate from (2E)-4-hydroxy-3-methylbutenyl diphosphate: step 1/1. It functions in the pathway isoprenoid biosynthesis; isopentenyl diphosphate biosynthesis via DXP pathway; isopentenyl diphosphate from 1-deoxy-D-xylulose 5-phosphate: step 6/6. In terms of biological role, catalyzes the conversion of 1-hydroxy-2-methyl-2-(E)-butenyl 4-diphosphate (HMBPP) into a mixture of isopentenyl diphosphate (IPP) and dimethylallyl diphosphate (DMAPP). Acts in the terminal step of the DOXP/MEP pathway for isoprenoid precursor biosynthesis. This is 4-hydroxy-3-methylbut-2-enyl diphosphate reductase from Chlamydia trachomatis serovar A (strain ATCC VR-571B / DSM 19440 / HAR-13).